Reading from the N-terminus, the 256-residue chain is Enolase-phosphatase E1 (256 aa).

Mg(2+)-binding residues include Asp-14 and Glu-16. Residues 142-143 (SS) and Lys-176 contribute to the substrate site. Asp-201 lines the Mg(2+) pocket.

Belongs to the HAD-like hydrolase superfamily. MasA/MtnC family. As to quaternary structure, monomer. The cofactor is Mg(2+).

The protein resides in the cytoplasm. The protein localises to the nucleus. The catalysed reaction is 5-methylsulfanyl-2,3-dioxopentyl phosphate + H2O = 1,2-dihydroxy-5-(methylsulfanyl)pent-1-en-3-one + phosphate. It participates in amino-acid biosynthesis; L-methionine biosynthesis via salvage pathway; L-methionine from S-methyl-5-thio-alpha-D-ribose 1-phosphate: step 3/6. The protein operates within amino-acid biosynthesis; L-methionine biosynthesis via salvage pathway; L-methionine from S-methyl-5-thio-alpha-D-ribose 1-phosphate: step 4/6. Bifunctional enzyme that catalyzes the enolization of 2,3-diketo-5-methylthiopentyl-1-phosphate (DK-MTP-1-P) into the intermediate 2-hydroxy-3-keto-5-methylthiopentenyl-1-phosphate (HK-MTPenyl-1-P), which is then dephosphorylated to form the acireductone 1,2-dihydroxy-3-keto-5-methylthiopentene (DHK-MTPene). The polypeptide is Enolase-phosphatase E1 (Drosophila melanogaster (Fruit fly)).